The following is a 311-amino-acid chain: Glutaminase (311 aa).

Positions 66, 116, 162, 169, 193, 245, and 263 each coordinate substrate.

This sequence belongs to the glutaminase family. In terms of assembly, homotetramer.

It catalyses the reaction L-glutamine + H2O = L-glutamate + NH4(+). This Rhodopseudomonas palustris (strain TIE-1) protein is Glutaminase.